A 159-amino-acid chain; its full sequence is Ribosomal RNA large subunit methyltransferase H (159 aa).

Residues Leu-76, Gly-108, and 127-132 (FGLLTL) each bind S-adenosyl-L-methionine.

Belongs to the RNA methyltransferase RlmH family. In terms of assembly, homodimer.

It is found in the cytoplasm. The enzyme catalyses pseudouridine(1915) in 23S rRNA + S-adenosyl-L-methionine = N(3)-methylpseudouridine(1915) in 23S rRNA + S-adenosyl-L-homocysteine + H(+). Functionally, specifically methylates the pseudouridine at position 1915 (m3Psi1915) in 23S rRNA. The polypeptide is Ribosomal RNA large subunit methyltransferase H (Leuconostoc citreum (strain KM20)).